The following is a 385-amino-acid chain: Torsin-3A (385 aa).

Positions 1–21 are cleaved as a signal peptide; it reads MFLGALWLLLLLPLRPPGAQG. N110 carries N-linked (GlcNAc...) asparagine glycosylation. 155–162 serves as a coordination point for ATP; sequence GWSGTGKN.

The protein belongs to the ClpA/ClpB family. Torsin subfamily. Interacts with TOR1AIP1. In terms of processing, N-glycosylated.

It is found in the cytoplasm. The protein localises to the endoplasmic reticulum lumen. The protein is Torsin-3A (Tor3a) of Mus musculus (Mouse).